The primary structure comprises 406 residues: 5-cytosine rRNA methyltransferase NSUN4 (406 aa).

S-adenosyl-L-methionine-binding residues include Gly-207, Gly-208, Lys-209, Asp-226, Arg-231, Asp-259, Gly-260, and Asp-277. Residue Cys-332 is the Nucleophile of the active site.

This sequence belongs to the class I-like SAM-binding methyltransferase superfamily. RsmB/NOP family.

The protein localises to the mitochondrion. It catalyses the reaction a cytidine in rRNA + S-adenosyl-L-methionine = a 5-methylcytidine in rRNA + S-adenosyl-L-homocysteine + H(+). It carries out the reaction a cytidine in mRNA + S-adenosyl-L-methionine = a 5-methylcytidine in mRNA + S-adenosyl-L-homocysteine + H(+). Involved in mitochondrial ribosome large subunit biogenesis. Its function is as follows. Mitochondrial RNA cytosine C(5)-methyltransferase that methylates cytosine to 5-methylcytosine (m5C) in various RNAs, such as rRNAs, mRNAs and some long non-coding RNAs (lncRNAs). Involved in mitochondrial ribosome small subunit (SSU) maturation by catalyzing methylation of mitochondrial 12S rRNA. The sequence is that of 5-cytosine rRNA methyltransferase NSUN4 (nsun4) from Xenopus tropicalis (Western clawed frog).